The following is a 77-amino-acid chain: Ubiquitin-like protein NEDD8 (77 aa).

The segment at 70 to 72 is interaction with uba-3; sequence VLA. Gly-76 is covalently cross-linked (Glycyl lysine isopeptide (Gly-Lys) (interchain with K-? in acceptor proteins)). Residue Phe-77 is a propeptide.

The protein belongs to the ubiquitin family. In terms of assembly, interacts with dcn-1. Covalently attached to cullins. May interact with atx-3. In terms of processing, cleavage of precursor form is necessary for function.

It is found in the nucleus. It localises to the cytoplasm. Ubiquitin-like protein which plays an important role in cell cycle control and embryogenesis. Covalent attachment to its substrates requires prior activation by the E1 complex uba-3-ula-1 and linkage to the E2 enzyme ubc-12. Attachment of ned-8 to cullins activates their associated E3 ubiquitin ligase activity, and thus promotes polyubiquitination and proteasomal degradation of cyclins and other regulatory proteins. The sequence is that of Ubiquitin-like protein NEDD8 (ned-8) from Caenorhabditis elegans.